Consider the following 271-residue polypeptide: Mannosyl-3-phosphoglycerate phosphatase (271 aa).

The active-site Nucleophile is Asp13. Mg(2+) contacts are provided by Asp13, Asp15, and Asp214.

The protein belongs to the HAD-like hydrolase superfamily. MPGP family. The cofactor is Mg(2+).

It is found in the cytoplasm. The enzyme catalyses 2-O-(alpha-D-mannosyl)-3-phosphoglycerate + H2O = (2R)-2-O-(alpha-D-mannosyl)-glycerate + phosphate. This chain is Mannosyl-3-phosphoglycerate phosphatase (yedP), found in Shigella dysenteriae serotype 1 (strain Sd197).